Reading from the N-terminus, the 1342-residue chain is DNA-directed RNA polymerase subunit beta (1342 aa).

This sequence belongs to the RNA polymerase beta chain family. As to quaternary structure, the RNAP catalytic core consists of 2 alpha, 1 beta, 1 beta' and 1 omega subunit. When a sigma factor is associated with the core the holoenzyme is formed, which can initiate transcription.

The enzyme catalyses RNA(n) + a ribonucleoside 5'-triphosphate = RNA(n+1) + diphosphate. Its function is as follows. DNA-dependent RNA polymerase catalyzes the transcription of DNA into RNA using the four ribonucleoside triphosphates as substrates. The sequence is that of DNA-directed RNA polymerase subunit beta from Yersinia enterocolitica serotype O:8 / biotype 1B (strain NCTC 13174 / 8081).